The primary structure comprises 246 residues: Probable phosphatase AHA_1344 (246 aa).

Residues H8, H10, H16, H41, E74, H102, H132, D193, and H195 each contribute to the Zn(2+) site.

It belongs to the PHP family. Zn(2+) serves as cofactor.

The protein is Probable phosphatase AHA_1344 of Aeromonas hydrophila subsp. hydrophila (strain ATCC 7966 / DSM 30187 / BCRC 13018 / CCUG 14551 / JCM 1027 / KCTC 2358 / NCIMB 9240 / NCTC 8049).